Here is a 726-residue protein sequence, read N- to C-terminus: Catalase-peroxidase (726 aa).

The tract at residues 1–34 (MSMSDDTHNSLSTGKCPFHQGSHDRSAGAGTSSH) is disordered. Residues 105-226 (WHGAGTYRSV…LGATEMGLIY (122 aa)) constitute a cross-link (tryptophyl-tyrosyl-methioninium (Trp-Tyr) (with M-252)). Histidine 106 functions as the Proton acceptor in the catalytic mechanism. Positions 226–252 (YVNPEGPDHSGEPLSAAAAIRATFGNM) form a cross-link, tryptophyl-tyrosyl-methioninium (Tyr-Met) (with W-105). Histidine 267 contributes to the heme b binding site.

This sequence belongs to the peroxidase family. Peroxidase/catalase subfamily. Homodimer or homotetramer. Heme b serves as cofactor. Post-translationally, formation of the three residue Trp-Tyr-Met cross-link is important for the catalase, but not the peroxidase activity of the enzyme.

It carries out the reaction H2O2 + AH2 = A + 2 H2O. The enzyme catalyses 2 H2O2 = O2 + 2 H2O. Its function is as follows. Bifunctional enzyme with both catalase and broad-spectrum peroxidase activity. This Citrobacter koseri (strain ATCC BAA-895 / CDC 4225-83 / SGSC4696) protein is Catalase-peroxidase.